Reading from the N-terminus, the 933-residue chain is Phosphoenolpyruvate carboxylase (933 aa).

Active-site residues include His-164 and Lys-595.

This sequence belongs to the PEPCase type 1 family. The cofactor is Mg(2+).

The catalysed reaction is oxaloacetate + phosphate = phosphoenolpyruvate + hydrogencarbonate. Functionally, forms oxaloacetate, a four-carbon dicarboxylic acid source for the tricarboxylic acid cycle. The chain is Phosphoenolpyruvate carboxylase from Rhodopseudomonas palustris (strain HaA2).